The sequence spans 137 residues: Peptide methionine sulfoxide reductase MsrB (137 aa).

One can recognise a MsrB domain in the interval 7–129; sequence PGELKNGLSE…NSASLSFTDE (123 aa). Positions 46, 49, 95, and 98 each coordinate Zn(2+). The Nucleophile role is filled by C118.

It belongs to the MsrB Met sulfoxide reductase family. Requires Zn(2+) as cofactor.

The catalysed reaction is L-methionyl-[protein] + [thioredoxin]-disulfide + H2O = L-methionyl-(R)-S-oxide-[protein] + [thioredoxin]-dithiol. The chain is Peptide methionine sulfoxide reductase MsrB from Klebsiella pneumoniae (strain 342).